The following is a 487-amino-acid chain: Cyclic AMP-dependent transcription factor ATF-2 (487 aa).

A C2H2-type zinc finger spans residues Phe7 to His31. Disordered regions lie at residues Glu106–Glu132 and Gln267–Lys354. A compositionally biased stretch (low complexity) spans Gln298 to Pro319. Positions Ala328–Arg345 are enriched in basic and acidic residues. One can recognise a bZIP domain in the interval Asp334–His397. The basic motif stretch occupies residues Lys336 to Lys356. The leucine-zipper stretch occupies residues Leu362–Leu390. Positions Val387–Ala396 match the Nuclear export signal motif. Residues Lys407–Ser487 form a disordered region. Over residues Val425–His436 the composition is skewed to polar residues. Positions Ser437–Ser449 are enriched in low complexity. Polar residues predominate over residues Ser457–Glu468.

Belongs to the bZIP family. ATF subfamily. As to quaternary structure, binds DNA as a dimer and can form a homodimer in the absence of DNA. Can form a heterodimer with JUN. Heterodimerization is essential for its transcriptional activity.

The protein resides in the nucleus. It localises to the cytoplasm. The protein localises to the mitochondrion outer membrane. In terms of biological role, transcriptional activator which regulates the transcription of various genes, including those involved in anti-apoptosis, cell growth, and DNA damage response. Dependent on its binding partner, binds to CRE (cAMP response element) consensus sequences (5'-TGACGTCA-3') or to AP-1 (activator protein 1) consensus sequences (5'-TGACTCA-3'). The sequence is that of Cyclic AMP-dependent transcription factor ATF-2 (ATF2) from Gallus gallus (Chicken).